A 340-amino-acid polypeptide reads, in one-letter code: GTPase Obg (340 aa).

Residues 1 to 159 (MDFIDEVKLY…KYVVLKLKVL (159 aa)) form the Obg domain. In terms of domain architecture, OBG-type G spans 160-329 (SDVGIIGMPN…LNEKLKKGSS (170 aa)). GTP is bound by residues 166-173 (GMPNAGKS), 191-195 (FTTIK), 212-215 (DIPG), 279-282 (NKCD), and 310-312 (GED). Mg(2+) contacts are provided by Ser173 and Thr193.

This sequence belongs to the TRAFAC class OBG-HflX-like GTPase superfamily. OBG GTPase family. As to quaternary structure, monomer. Mg(2+) is required as a cofactor.

The protein localises to the cytoplasm. An essential GTPase which binds GTP, GDP and possibly (p)ppGpp with moderate affinity, with high nucleotide exchange rates and a fairly low GTP hydrolysis rate. Plays a role in control of the cell cycle, stress response, ribosome biogenesis and in those bacteria that undergo differentiation, in morphogenesis control. This chain is GTPase Obg, found in Wolbachia sp. subsp. Brugia malayi (strain TRS).